The primary structure comprises 126 residues: UPF0231 protein VC0395_A0134/VC395_0622 (126 aa).

The protein belongs to the UPF0231 family.

This Vibrio cholerae serotype O1 (strain ATCC 39541 / Classical Ogawa 395 / O395) protein is UPF0231 protein VC0395_A0134/VC395_0622.